A 109-amino-acid chain; its full sequence is U26-theraphotoxin-Cg1b (109 aa).

The first 18 residues, 1–18, serve as a signal peptide directing secretion; sequence MNTIIPLLLLSLLITVYA. Positions 19–67 are excised as a propeptide; that stretch reads YALEDGNKEEMQDIAESEFEASNEMLQLAHLLEADRAETEEDRNSRQKR. Disulfide bonds link Cys68/Cys83, Cys75/Cys88, and Cys82/Cys103.

Belongs to the neurotoxin 14 (magi-1) family. 07 (Jztx-56) subfamily. Expressed by the venom gland.

The protein resides in the secreted. In terms of biological role, probable ion channel inhibitor. The chain is U26-theraphotoxin-Cg1b from Chilobrachys guangxiensis (Chinese earth tiger tarantula).